The following is a 373-amino-acid chain: CASP-like protein UU6 (373 aa).

Disordered regions lie at residues 1–100 (MGTL…GSEG) and 172–195 (TKET…PKKK). The Cytoplasmic portion of the chain corresponds to 1 to 204 (MGTLTDPTVD…KHRLRKHLTA (204 aa)). Residues 56–74 (KTNTGNAAESTASTENGET) show a composition bias toward polar residues. The helical transmembrane segment at 205–225 (IGAYSFAFRFSETVLSLIAIV) threads the bilayer. At 226–253 (VMCSTRGSMRTDGVDFGTLKFNHFQAYR) the chain is on the extracellular side. The chain crosses the membrane as a helical span at residues 254–274 (YLVAVNVIVFVYSTFQFIQLL). Over 275 to 276 (YT) the chain is Cytoplasmic. The chain crosses the membrane as a helical span at residues 277–297 (VILGISFIPSIFISTWMTFGF). Topologically, residues 298–342 (DQLFLYLLLSASTSAATVANMSYTGEMGIQLCSRFDVGSFCSKAD) are extracellular. Asn317 carries N-linked (GlcNAc...) asparagine glycosylation. The helical transmembrane segment at 343 to 363 (VAVTMSFFAVLAMLSSTILAI) threads the bilayer. The Cytoplasmic segment spans residues 364–373 (YRIAVLLREY).

The protein belongs to the Casparian strip membrane proteins (CASP) family. In terms of assembly, homodimer and heterodimers.

The protein localises to the cell membrane. The sequence is that of CASP-like protein UU6 from Physcomitrium patens (Spreading-leaved earth moss).